The primary structure comprises 491 residues: MIGKRQTSTLNWDTVFAVPISVVNKAIKDKKSSPENFEFEDSSGSKCKGDFGDWQIITGGDGSNIRMKIPIYNFKAELVDDKYGIFNGNGGFESGEMNIQVKLKYFPHDKISKYKDVELVDLKVRSESADPIDPVVVMLSLKNLNGFYFNFLNEFGEDLQDIIEMFFIELVKQWLTENISLFNHIFSVVNLNLYIDQYSQWSWSRPSYVSYAYTDIEGDLDKSLLGVLCMTGGRNPDLRQQKVDPHAVPESSQCGFLIYEERVLRDLLLPTLPMKFKNSTVEDYEVINASGESGQYQYILRLKKGRSVSLDRVEANGSKYDPYMTEMSISLSNDVLKLEATTETSVGMGGKVGCDTINWYKLVLAKNGNGEQTISYEEVGEPTVINYVIKEGENWVWDVIAAIIAILATAVLAIFTGGAAFFIGGIVIAIITGFIAKTPDIILNWNLETSPSIDMMLENSTSQIIWNARDIFELDYVALNGPLQLGGELTV.

This sequence belongs to the TULIP P47 family. As to quaternary structure, heterodimer of OrfX1 and OrfX3; crystallizes as a dimer of heterodimers.

Expression of the ptox operon (ntnh-orfX1-orfX2-orfX3-pmp1) in B.thuringiensis kills Anopheles but not Aedes mosquito 3rd instar larvae. The ntnh-pmp1 construct is about half as toxic. The polypeptide is Protein OrfX3 (Paraclostridium bifermentans (Clostridium bifermentans)).